The chain runs to 805 residues: Leucine--tRNA ligase (805 aa).

The 'HIGH' region signature appears at 39–50 (PYPSGKGLHVGH). The short motif at 583–587 (KMSKS) is the 'KMSKS' region element. Lysine 586 serves as a coordination point for ATP.

It belongs to the class-I aminoacyl-tRNA synthetase family.

The protein resides in the cytoplasm. The enzyme catalyses tRNA(Leu) + L-leucine + ATP = L-leucyl-tRNA(Leu) + AMP + diphosphate. This chain is Leucine--tRNA ligase, found in Mycoplasmoides gallisepticum (strain R(low / passage 15 / clone 2)) (Mycoplasma gallisepticum).